Consider the following 494-residue polypeptide: One cut domain family member 3 (494 aa).

3 disordered regions span residues 130-162, 199-239, and 295-319; these read AAAVAGAHGGHPHAHPHPAAAPPPPPPPQRLAA, LSPL…GDKL, and AHGPHGGGGGPGGSGGGPSAGAAAE. Composition is skewed to pro residues over residues 148-158 and 214-225; these read AAAPPPPPPPQ and PQPPPPPPPPPL. A compositionally biased stretch (gly residues) spans 297 to 313; that stretch reads GPHGGGGGPGGSGGGPS. Positions 312-398 form a DNA-binding region, CUT; that stretch reads PSAGAAAEEI…QRMSALRLAA (87 aa). Residues 414–473 constitute a DNA-binding region (homeobox); sequence PKKQRLVFTDLQRRTLIAIFKENKRPSKEMQVTISQQLGLELNTVSNFFMNARRRCMNRW. The tract at residues 475-494 is disordered; the sequence is EEPSTAPGGPAGATATFSKA. A compositionally biased stretch (low complexity) spans 476–494; the sequence is EPSTAPGGPAGATATFSKA.

The protein belongs to the CUT homeobox family.

The protein resides in the nucleus. Its function is as follows. Transcriptional activator. Binds the consensus DNA sequence 5'-DHWATTGAYTWWD-3' on a variety of gene promoters such as those of HNF3B and TTR. The chain is One cut domain family member 3 (ONECUT3) from Homo sapiens (Human).